A 689-amino-acid polypeptide reads, in one-letter code: Glycine--tRNA ligase beta subunit (689 aa).

It belongs to the class-II aminoacyl-tRNA synthetase family. In terms of assembly, tetramer of two alpha and two beta subunits.

Its subcellular location is the cytoplasm. It catalyses the reaction tRNA(Gly) + glycine + ATP = glycyl-tRNA(Gly) + AMP + diphosphate. The sequence is that of Glycine--tRNA ligase beta subunit from Shigella dysenteriae serotype 1 (strain Sd197).